The sequence spans 559 residues: Membrane protein insertase YidC (559 aa).

6 consecutive transmembrane segments (helical) span residues I5–F25, A332–F352, Y355–F375, L429–I449, L474–L494, and F520–W540.

Belongs to the OXA1/ALB3/YidC family. Type 1 subfamily. Interacts with the Sec translocase complex via SecD. Specifically interacts with transmembrane segments of nascent integral membrane proteins during membrane integration.

It localises to the cell inner membrane. Functionally, required for the insertion and/or proper folding and/or complex formation of integral membrane proteins into the membrane. Involved in integration of membrane proteins that insert both dependently and independently of the Sec translocase complex, as well as at least some lipoproteins. Aids folding of multispanning membrane proteins. This Rickettsia bellii (strain OSU 85-389) protein is Membrane protein insertase YidC.